Here is a 331-residue protein sequence, read N- to C-terminus: DNA polymerase IV (331 aa).

A UmuC domain is found at 1-174; sequence FFAAVEMRDN…LPLAKIPGVG (174 aa). Residue D92 participates in Mg(2+) binding. Residue E93 is part of the active site.

This sequence belongs to the DNA polymerase type-Y family. As to quaternary structure, monomer. The cofactor is Mg(2+).

The protein resides in the cytoplasm. The enzyme catalyses DNA(n) + a 2'-deoxyribonucleoside 5'-triphosphate = DNA(n+1) + diphosphate. Poorly processive, error-prone DNA polymerase involved in untargeted mutagenesis. Copies undamaged DNA at stalled replication forks, which arise in vivo from mismatched or misaligned primer ends. These misaligned primers can be extended by PolIV. Exhibits no 3'-5' exonuclease (proofreading) activity. May be involved in translesional synthesis, in conjunction with the beta clamp from PolIII. The protein is DNA polymerase IV of Escherichia fergusonii.